Reading from the N-terminus, the 601-residue chain is Elongation factor 4 (601 aa).

Residues 6–188 (KNIRNFSIIA…QIIKKIPAPD (183 aa)) form the tr-type G domain. Residues 18–23 (DHGKST) and 135–138 (NKID) each bind GTP.

It belongs to the TRAFAC class translation factor GTPase superfamily. Classic translation factor GTPase family. LepA subfamily.

The protein localises to the cell membrane. It catalyses the reaction GTP + H2O = GDP + phosphate + H(+). In terms of biological role, required for accurate and efficient protein synthesis under certain stress conditions. May act as a fidelity factor of the translation reaction, by catalyzing a one-codon backward translocation of tRNAs on improperly translocated ribosomes. Back-translocation proceeds from a post-translocation (POST) complex to a pre-translocation (PRE) complex, thus giving elongation factor G a second chance to translocate the tRNAs correctly. Binds to ribosomes in a GTP-dependent manner. The chain is Elongation factor 4 from Buchnera aphidicola subsp. Schizaphis graminum (strain Sg).